The chain runs to 621 residues: Chaperone protein HscA homolog (621 aa).

It belongs to the heat shock protein 70 family.

Its function is as follows. Chaperone involved in the maturation of iron-sulfur cluster-containing proteins. Has a low intrinsic ATPase activity which is markedly stimulated by HscB. The chain is Chaperone protein HscA homolog from Cupriavidus necator (strain ATCC 17699 / DSM 428 / KCTC 22496 / NCIMB 10442 / H16 / Stanier 337) (Ralstonia eutropha).